Consider the following 80-residue polypeptide: MKWNNMLKAAGIAVLLFSVFAYAAPSLKAVQAKTPTVSTHTYKKIKELTYPQVHHVGNAAFEKKINQELKAYMNNRIRNT.

A signal peptide spans 1 to 23 (MKWNNMLKAAGIAVLLFSVFAYA).

This is an uncharacterized protein from Bacillus subtilis (strain 168).